A 319-amino-acid chain; its full sequence is Malate dehydrogenase (319 aa).

Residues 10 to 15 and D34 contribute to the NAD(+) site; that span reads GAGNIG. R83 and R89 together coordinate substrate. NAD(+) is bound by residues N96 and 119–121; that span reads ITN. Residues N121 and R152 each contribute to the substrate site. The active-site Proton acceptor is H176.

This sequence belongs to the LDH/MDH superfamily. MDH type 3 family.

The catalysed reaction is (S)-malate + NAD(+) = oxaloacetate + NADH + H(+). Catalyzes the reversible oxidation of malate to oxaloacetate. The sequence is that of Malate dehydrogenase from Francisella philomiragia subsp. philomiragia (strain ATCC 25017 / CCUG 19701 / FSC 153 / O#319-036).